The following is a 468-amino-acid chain: 3-isopropylmalate dehydratase large subunit (468 aa).

[4Fe-4S] cluster contacts are provided by Cys-346, Cys-406, and Cys-409.

This sequence belongs to the aconitase/IPM isomerase family. LeuC type 1 subfamily. As to quaternary structure, heterodimer of LeuC and LeuD. The cofactor is [4Fe-4S] cluster.

The enzyme catalyses (2R,3S)-3-isopropylmalate = (2S)-2-isopropylmalate. It functions in the pathway amino-acid biosynthesis; L-leucine biosynthesis; L-leucine from 3-methyl-2-oxobutanoate: step 2/4. Its function is as follows. Catalyzes the isomerization between 2-isopropylmalate and 3-isopropylmalate, via the formation of 2-isopropylmaleate. This Cyanothece sp. (strain PCC 7425 / ATCC 29141) protein is 3-isopropylmalate dehydratase large subunit.